A 299-amino-acid polypeptide reads, in one-letter code: Probable lipid kinase YegS (299 aa).

The DAGKc domain occupies 2 to 133 (ANFPASLLIL…IDMARVNDKT (132 aa)). Residues Thr-40, 66 to 72 (GDGTINE), and Thr-95 each bind ATP. The Mg(2+) site is built by Leu-215, Asp-218, and Leu-220. The active-site Proton acceptor is Glu-271.

This sequence belongs to the diacylglycerol/lipid kinase family. YegS lipid kinase subfamily. The cofactor is Mg(2+). It depends on Ca(2+) as a cofactor.

It is found in the cytoplasm. Probably phosphorylates lipids; the in vivo substrate is unknown. The sequence is that of Probable lipid kinase YegS from Salmonella newport (strain SL254).